A 444-amino-acid chain; its full sequence is ATP-dependent protease ATPase subunit HslU (444 aa).

ATP contacts are provided by residues isoleucine 18, 60-65 (GVGKTE), aspartate 256, glutamate 322, and arginine 394.

It belongs to the ClpX chaperone family. HslU subfamily. As to quaternary structure, a double ring-shaped homohexamer of HslV is capped on each side by a ring-shaped HslU homohexamer. The assembly of the HslU/HslV complex is dependent on binding of ATP.

Its subcellular location is the cytoplasm. ATPase subunit of a proteasome-like degradation complex; this subunit has chaperone activity. The binding of ATP and its subsequent hydrolysis by HslU are essential for unfolding of protein substrates subsequently hydrolyzed by HslV. HslU recognizes the N-terminal part of its protein substrates and unfolds these before they are guided to HslV for hydrolysis. This Klebsiella pneumoniae (strain 342) protein is ATP-dependent protease ATPase subunit HslU.